The chain runs to 100 residues: Urease subunit gamma (100 aa).

This sequence belongs to the urease gamma subunit family. Heterotrimer of UreA (gamma), UreB (beta) and UreC (alpha) subunits. Three heterotrimers associate to form the active enzyme.

Its subcellular location is the cytoplasm. The enzyme catalyses urea + 2 H2O + H(+) = hydrogencarbonate + 2 NH4(+). Its pathway is nitrogen metabolism; urea degradation; CO(2) and NH(3) from urea (urease route): step 1/1. The chain is Urease subunit gamma from Streptomyces griseus subsp. griseus (strain JCM 4626 / CBS 651.72 / NBRC 13350 / KCC S-0626 / ISP 5235).